Here is a 234-residue protein sequence, read N- to C-terminus: Ponticulin-like protein J (234 aa).

The signal sequence occupies residues M1–A20. Residues N19, N143, N166, and N206 are each glycosylated (N-linked (GlcNAc...) asparagine). A disordered region spans residues T115–N213. Positions K154–T195 are enriched in low complexity. Residue N212 is the site of GPI-like-anchor amidated asparagine attachment. An N-linked (GlcNAc...) asparagine glycan is attached at N213. Positions N213 to F234 are cleaved as a propeptide — removed in mature form.

Belongs to the ponticulin family. The GPI-like-anchor contains a phosphoceramide group, rather than a phosphatidyl group.

It is found in the cell membrane. Functionally, binds F-actin and nucleates actin assembly. This Dictyostelium discoideum (Social amoeba) protein is Ponticulin-like protein J (ponJ).